We begin with the raw amino-acid sequence, 267 residues long: 4-hydroxy-tetrahydrodipicolinate reductase (267 aa).

NAD(+)-binding positions include 8-13 (GAAGRM) and Asp-34. Residue Arg-35 coordinates NADP(+). NAD(+) is bound by residues 98–100 (GTT) and 122–125 (AANF). His-155 functions as the Proton donor/acceptor in the catalytic mechanism. His-156 provides a ligand contact to (S)-2,3,4,5-tetrahydrodipicolinate. Lys-159 (proton donor) is an active-site residue. 165–166 (GT) serves as a coordination point for (S)-2,3,4,5-tetrahydrodipicolinate.

It belongs to the DapB family.

It is found in the cytoplasm. The catalysed reaction is (S)-2,3,4,5-tetrahydrodipicolinate + NAD(+) + H2O = (2S,4S)-4-hydroxy-2,3,4,5-tetrahydrodipicolinate + NADH + H(+). It catalyses the reaction (S)-2,3,4,5-tetrahydrodipicolinate + NADP(+) + H2O = (2S,4S)-4-hydroxy-2,3,4,5-tetrahydrodipicolinate + NADPH + H(+). The protein operates within amino-acid biosynthesis; L-lysine biosynthesis via DAP pathway; (S)-tetrahydrodipicolinate from L-aspartate: step 4/4. Its function is as follows. Catalyzes the conversion of 4-hydroxy-tetrahydrodipicolinate (HTPA) to tetrahydrodipicolinate. This Ectopseudomonas mendocina (strain ymp) (Pseudomonas mendocina) protein is 4-hydroxy-tetrahydrodipicolinate reductase.